The sequence spans 360 residues: MKTVLIGVGQAGGKLASALQSFDRQTGFGAVLDAVAVNTAKADLQSLPVETVLIGQDRVNGHGVGGDNELGAAVMESDQTEVMSALDGRVTAEAESIFVVAGLGGGSGSGGAPVLAKALAGVYDVPVYVLGILPGADEGALYQVNAGRSLKTVAREADAVLLVDNDAFRSAGESMSEGYDAINEAIARRVGLLLAAGEATEGVGESVVDTSEVINTLRSGGIAALGYASAEASPNAEDNINAVMSTTRRAVLTGTSLPDASDADAALVVIAGEPDTIPRKGVERARRWVEDETGSMQVRGGDFPLESGRLASLVLLGGVERSERVESFMERAREAIDKAETEPREDPKGMWHSDDLDDLL.

Residues 10 to 14 (QAGGK), 65 to 66 (GG), 106 to 108 (GSG), E138, N165, and N183 each bind GTP. The span at 334–354 (EAIDKAETEPREDPKGMWHSD) shows a compositional bias: basic and acidic residues. The tract at residues 334 to 360 (EAIDKAETEPREDPKGMWHSDDLDDLL) is disordered.

The protein belongs to the CetZ family.

The protein localises to the cytoplasm. In terms of biological role, involved in cell shape control. This chain is Tubulin-like protein CetZ2, found in Haloferax volcanii (strain ATCC 29605 / DSM 3757 / JCM 8879 / NBRC 14742 / NCIMB 2012 / VKM B-1768 / DS2) (Halobacterium volcanii).